An 869-amino-acid polypeptide reads, in one-letter code: Eukaryotic translation initiation factor 3 subunit C (869 aa).

2 disordered regions span residues 1–92 and 182–242; these read MSRF…KSAK and IKKA…VGKG. The segment covering 14 to 55 has biased composition (acidic residues); it reads SSDEEEDLYSDDEEVQEQPEEESSEDDSEEDDDDDDDSDSSS. Basic and acidic residues predominate over residues 185-203; that stretch reads ASKEHQKDIDSFRADKDAY. A PCI domain is found at 607-781; that stretch reads FHMHINLELL…SSIIFRKGVE (175 aa). Residues 803–869 form a disordered region; the sequence is NERTLETRTQ…ALGAAVGSRA (67 aa). Gly residues predominate over residues 823 to 843; the sequence is GRGGRGGNRGGRGGGRGGRGG.

The protein belongs to the eIF-3 subunit C family. Component of the eukaryotic translation initiation factor 3 (eIF-3) complex.

The protein localises to the cytoplasm. Component of the eukaryotic translation initiation factor 3 (eIF-3) complex, which is involved in protein synthesis of a specialized repertoire of mRNAs and, together with other initiation factors, stimulates binding of mRNA and methionyl-tRNAi to the 40S ribosome. The eIF-3 complex specifically targets and initiates translation of a subset of mRNAs involved in cell proliferation. In Botryotinia fuckeliana (strain B05.10) (Noble rot fungus), this protein is Eukaryotic translation initiation factor 3 subunit C (nip1).